A 493-amino-acid chain; its full sequence is Phospholipid transfer protein (493 aa).

A signal peptide spans 1 to 17; it reads MVLLWALFLALLAGAHA. 5 N-linked (GlcNAc...) asparagine glycosylation sites follow: asparagine 64, asparagine 91, asparagine 94, asparagine 117, and asparagine 143. A disulfide bridge links cysteine 146 with cysteine 185. N-linked (GlcNAc...) asparagine glycans are attached at residues asparagine 245 and asparagine 398.

Belongs to the BPI/LBP/Plunc superfamily. BPI/LBP family. Post-translationally, glycosylation is necessary for secretion and its phospholipid transfer activity. In terms of tissue distribution, highest level expression in the lung, brain and heart with relatively low levels in the liver, skeletal muscle and testis and very low levels found in the spleen and kidney.

It localises to the secreted. Its subcellular location is the nucleus. The enzyme catalyses a 1,2-diacyl-sn-glycero-3-phosphocholine(in) = a 1,2-diacyl-sn-glycero-3-phosphocholine(out). The catalysed reaction is a 1,2-diacyl-sn-glycero-3-phosphoethanolamine(in) = a 1,2-diacyl-sn-glycero-3-phosphoethanolamine(out). It carries out the reaction a 1,2-diacyl-sn-glycerol(in) = a 1,2-diacyl-sn-glycerol(out). It catalyses the reaction a 1,2-diacyl-sn-glycero-3-phosphate(in) = a 1,2-diacyl-sn-glycero-3-phosphate(out). The enzyme catalyses a sphingomyelin(in) = a sphingomyelin(out). The catalysed reaction is a 1,2-diacyl-sn-glycero-3-phospho-(1'-sn-glycerol)(in) = a 1,2-diacyl-sn-glycero-3-phospho-(1'-sn-glycerol)(out). It carries out the reaction a 1,2-diacyl-sn-glycero-3-phospho-(1D-myo-inositol)(in) = a 1,2-diacyl-sn-glycero-3-phospho-(1D-myo-inositol)(out). It catalyses the reaction 1-hexadecanoyl-2-(5Z,8Z,11Z,14Z-eicosatetraenoyl)-sn-glycero-3-phosphoethanolamine(in) = 1-hexadecanoyl-2-(5Z,8Z,11Z,14Z-eicosatetraenoyl)-sn-glycero-3-phosphoethanolamine(out). The enzyme catalyses N-(hexadecanoyl)-sphing-4-enine-1-phosphocholine(in) = N-(hexadecanoyl)-sphing-4-enine-1-phosphocholine(out). The catalysed reaction is 1,2-dihexadecanoyl-sn-glycero-3-phosphocholine(in) = 1,2-dihexadecanoyl-sn-glycero-3-phosphocholine(out). Functionally, mediates the transfer of phospholipids and free cholesterol from triglyceride-rich lipoproteins (low density lipoproteins or LDL and very low density lipoproteins or VLDL) into high-density lipoproteins (HDL) as well as the exchange of phospholipids between triglyceride-rich lipoproteins themselves. Facilitates the transfer of a spectrum of different lipid molecules, including sphingomyelin, phosphatidylcholine, phosphatidylinositol, phosphatidylglycerol, and phosphatidyl ethanolamine. Plays an important role in HDL remodeling which involves modulating the size and composition of HDL. Also plays a key role in the uptake of cholesterol from peripheral cells and tissues that is subsequently transported to the liver for degradation and excretion. Two distinct forms of PLTP exist in plasma: an active form that can transfer phosphatidylcholine from phospholipid vesicles to HDL, and an inactive form that lacks this capability. The polypeptide is Phospholipid transfer protein (Pltp) (Mus musculus (Mouse)).